The following is a 202-amino-acid chain: uncharacterized protein (202 aa).

The tract at residues 178–202 (VCSSEDSEADRYSDYGWGGPSSPFN) is disordered.

This is an uncharacterized protein from Homo sapiens (Human).